The following is a 209-amino-acid chain: Glycine cleavage system H-like protein gcvH4 (209 aa).

A compositionally biased stretch (low complexity) spans 35 to 51; sequence NNNNNNNNNNNNNNNNN. Residues 35 to 56 form a disordered region; it reads NNNNNNNNNNNNNNNNNRNKKL. One can recognise a Lipoyl-binding domain in the interval 73 to 159; sequence FATIGITNYV…KTTTTTTKIK (87 aa).

It belongs to the GcvH family.

In Dictyostelium discoideum (Social amoeba), this protein is Glycine cleavage system H-like protein gcvH4 (gcvH4).